We begin with the raw amino-acid sequence, 327 residues long: Polyprenyl transferase andD (327 aa).

8 consecutive transmembrane segments (helical) span residues 49-69 (LGYILVCYPFLVAGAFSASIA), 81-101 (ITLLCLWSIFLRSGGCIWDDI), 140-160 (FAFVAELPGVCMVDALIMLFF), 174-194 (PQLILGTIGWAIPMTMHGLNL), 201-221 (IPMAAMFAFIALVTIMNDIIY), 244-264 (CLDALTFALVFASSAALVIAG), 271-291 (APFFTISVGGHFGFFLFLAMA), and 307-327 (CCTSATFLLIVGMVVDLVWRS).

The protein belongs to the UbiA prenyltransferase family. The cofactor is Mg(2+).

The protein resides in the membrane. It functions in the pathway secondary metabolite biosynthesis; terpenoid biosynthesis. Polyprenyl transferase; part of the gene cluster that mediates the biosynthesis of anditomin, a fungal meroterpenoid. The first step of the pathway is the synthesis of 3,5-dimethylorsellinic acid (DMOA) by the polyketide synthase andM. DMOA is then converted to the phthalide compound 5,7-dihydroxy-4,6-dimethylphthalide (DHDMP) by the cytochrome P450 monooxygenase andK, which is further prenylated by the prenyltransferase andD to yield farnesyl-DHDMP. Further epoxidation by the FAD-dependent monooxygenase andE leads to epoxyfarnesyl-DHDMP. The next step involves the terpene cyclase andB that converts epoxyfarnesyl-DHDMP into preandiloid A through opening of the epoxide ring followed by the cyclization of the farnesyl moiety. Preandiloid A is in turn oxidized at the C-3 hydroxyl group to yield preandiloid B by the dehydrogenase andC. The dioxygenase andA is solely responsible for the dehydrogenation of preandiloid B leading to the enone preandiloid C, as well as for the intriguing structural rearrangement to generate the bicyclo[2.2.2]octane core, transforming preandiloid C into andiconin. FAD-binding monooxygenase andJ then produces andilesin D which is reduced by dehydrogenase andI to yield andilesin A. Action of acetyltransferase andG followed by a spontaneous acetate elimination leads then to andilesin B, which is in turn substrate of the short chain dehydrogenase andH to yield andilesin C. Finally, the dioxygenase andF catalyzes the transformation of andilesin C to anditomin. The sequence is that of Polyprenyl transferase andD from Emericella variicolor (Aspergillus stellatus).